A 333-amino-acid polypeptide reads, in one-letter code: MRPFLMILSVTYIASAESPAKTHVRHHNRYHSHSPLKSNLRKTYNSPRLDKPLSDIGITDARRVPPVYISGNSSPLVADVGPDSGESGVVLAPSIDGSSEGNIGIYVSPSRDGQGIGSRERLISLHHLIHHAQGEALKASAISSAAKLEASALLAQRQELNAKIMANRAAMLQEEEQRLVAQRSSNPLILVKDTVPVANVANNNLSFEHHNELLNKKLDMIKKDQDEAIKRAENLARLHKARTQILPDSLVASDPKQFKDFVDGGPAQDLTFEVPVDPSIGNYYVSSDPGENLQTNKAPLTTGDLPYFIAHSNENGVFSPYGSLSNGESVAQA.

Positions 1-16 are cleaved as a signal peptide; that stretch reads MRPFLMILSVTYIASA. The N-linked (GlcNAc...) asparagine glycan is linked to asparagine 204.

This is an uncharacterized protein from Encephalitozoon cuniculi (strain GB-M1) (Microsporidian parasite).